The sequence spans 631 residues: Phosphomethylpyrimidine synthase (631 aa).

Residues Asn-239, Met-268, Tyr-297, His-333, 353-355, 394-397, and Glu-433 contribute to the substrate site; these read SRG and DGLR. His-437 lines the Zn(2+) pocket. Tyr-460 contacts substrate. Zn(2+) is bound at residue His-501. 3 residues coordinate [4Fe-4S] cluster: Cys-581, Cys-584, and Cys-589.

It belongs to the ThiC family. Homodimer. The cofactor is [4Fe-4S] cluster.

The enzyme catalyses 5-amino-1-(5-phospho-beta-D-ribosyl)imidazole + S-adenosyl-L-methionine = 4-amino-2-methyl-5-(phosphooxymethyl)pyrimidine + CO + 5'-deoxyadenosine + formate + L-methionine + 3 H(+). It participates in cofactor biosynthesis; thiamine diphosphate biosynthesis. Functionally, catalyzes the synthesis of the hydroxymethylpyrimidine phosphate (HMP-P) moiety of thiamine from aminoimidazole ribotide (AIR) in a radical S-adenosyl-L-methionine (SAM)-dependent reaction. This Escherichia coli (strain 55989 / EAEC) protein is Phosphomethylpyrimidine synthase.